Here is a 529-residue protein sequence, read N- to C-terminus: F-box/LRR-repeat protein At5g63520 (529 aa).

Residues 1-22 form a disordered region; sequence MAEVSLTKKEMTTKGKSENSKK. Residues 31-78 enclose the F-box domain; that stretch reads VPIAAMNEDLLHNILLRLPAKSFAFASCVNRFWSSVCNRILSRPKMIS. LRR repeat units lie at residues 265-288 and 418-441; these read GNEPRNVQLQKDDIRVLAGLIFAR and QVYLPDLKVAEAALNDVSAQLRNL.

This Arabidopsis thaliana (Mouse-ear cress) protein is F-box/LRR-repeat protein At5g63520.